The chain runs to 300 residues: Bidirectional sugar transporter SWEET12 (300 aa).

Residues 1–4 are Extracellular-facing; the sequence is MVQA. The helical transmembrane segment at 5-25 threads the bilayer; that stretch reads LVFAVGIVGNILSFLVILAPV. The MtN3/slv 1 domain occupies 8 to 92; the sequence is AVGIVGNILS…TVYLLYAPRQ (85 aa). Over 26 to 38 the chain is Cytoplasmic; the sequence is PTFYRVYKKKSTE. Residues 39–61 form a helical membrane-spanning segment; it reads SFQSVPYAVALLSAMLWLYYALL. Topologically, residues 62 to 67 are extracellular; it reads TSDLLL. The chain crosses the membrane as a helical span at residues 68–88; sequence LSINSIGCLVESLYLTVYLLY. The Cytoplasmic segment spans residues 89 to 99; the sequence is APRQAMAFTLK. Residues 100 to 120 form a helical membrane-spanning segment; that stretch reads LVCAMNLALFAAVVAALQLLV. Residues 121 to 128 are Extracellular-facing; sequence KATDRRVT. Residues 129–149 form a helical membrane-spanning segment; it reads LAGGIGASFALAVFVAPLTII. Residues 131–213 enclose the MtN3/slv 2 domain; the sequence is GGIGASFALA…VLYVVYKNPK (83 aa). The Cytoplasmic portion of the chain corresponds to 150–162; it reads RQVIRTKSVEFMP. Residues 163–183 traverse the membrane as a helical segment; that stretch reads FWLSFFLTLSAVVWFFYGLLM. At 184 to 185 the chain is on the extracellular side; sequence KD. The chain crosses the membrane as a helical span at residues 186 to 206; sequence FFVATPNVLGLLFGLAQMVLY. The Cytoplasmic portion of the chain corresponds to 207 to 300; that stretch reads VVYKNPKKNS…PPALPAVEVA (94 aa). The disordered stretch occupies residues 256 to 300; it reads ADLEAAAPATPQRPADDDAIDHRSVVVDIPPPPQPPPALPAVEVA. Residues 269-280 are compositionally biased toward basic and acidic residues; sequence PADDDAIDHRSV. Over residues 284–294 the composition is skewed to pro residues; sequence IPPPPQPPPAL.

It belongs to the SWEET sugar transporter family. As to quaternary structure, forms homooligomers and/or heterooligomers.

The protein resides in the cell membrane. Mediates both low-affinity uptake and efflux of sugar across the plasma membrane. Its function is as follows. Confers blight susceptibility. Confers TAL effector-mediated susceptibility to Xanthomonas oryzae pv. oryzae. The sequence is that of Bidirectional sugar transporter SWEET12 (SWEET12) from Oryza sativa subsp. japonica (Rice).